A 344-amino-acid polypeptide reads, in one-letter code: Dihydroorotate dehydrogenase (quinone) (344 aa).

FMN is bound by residues 62 to 66 (AGLDK) and T86. Residue K66 participates in substrate binding. Residue 111–115 (NRMGF) coordinates substrate. Residues N139 and N172 each coordinate FMN. Residue N172 coordinates substrate. S175 (nucleophile) is an active-site residue. N177 contacts substrate. 2 residues coordinate FMN: K217 and T245. 246 to 247 (NT) contacts substrate. Residues G268, G297, and 318 to 319 (YS) contribute to the FMN site.

It belongs to the dihydroorotate dehydrogenase family. Type 2 subfamily. In terms of assembly, monomer. FMN is required as a cofactor.

The protein localises to the cell membrane. The catalysed reaction is (S)-dihydroorotate + a quinone = orotate + a quinol. The protein operates within pyrimidine metabolism; UMP biosynthesis via de novo pathway; orotate from (S)-dihydroorotate (quinone route): step 1/1. Catalyzes the conversion of dihydroorotate to orotate with quinone as electron acceptor. This is Dihydroorotate dehydrogenase (quinone) from Chromobacterium violaceum (strain ATCC 12472 / DSM 30191 / JCM 1249 / CCUG 213 / NBRC 12614 / NCIMB 9131 / NCTC 9757 / MK).